The following is a 547-amino-acid chain: Chaperonin GroEL 3 (547 aa).

ATP-binding positions include 30–33 (TLGP), Lys51, 87–91 (DGTTT), Gly415, and Asp496.

It belongs to the chaperonin (HSP60) family. Forms a cylinder of 14 subunits composed of two heptameric rings stacked back-to-back. Interacts with the co-chaperonin GroES.

The protein localises to the cytoplasm. It catalyses the reaction ATP + H2O + a folded polypeptide = ADP + phosphate + an unfolded polypeptide.. Together with its co-chaperonin GroES, plays an essential role in assisting protein folding. The GroEL-GroES system forms a nano-cage that allows encapsulation of the non-native substrate proteins and provides a physical environment optimized to promote and accelerate protein folding. The sequence is that of Chaperonin GroEL 3 from Bradyrhizobium sp. (strain ORS 278).